Reading from the N-terminus, the 243-residue chain is Beta-glucanase (243 aa).

The N-terminal stretch at 1–27 (MSYRVKRMLMLLVTGLFLSLSTFAASA) is a signal peptide. The GH16 domain occupies 29–243 (AQTGGSFYEP…SLHWVRYTKR (215 aa)). The cysteines at positions 61 and 90 are disulfide-linked. Glu134 (nucleophile) is an active-site residue. Catalysis depends on Glu138, which acts as the Proton donor.

The protein belongs to the glycosyl hydrolase 16 family.

It carries out the reaction Hydrolysis of (1-&gt;4)-beta-D-glucosidic linkages in beta-D-glucans containing (1-&gt;3)- and (1-&gt;4)-bonds.. The sequence is that of Beta-glucanase (bg1) from Bacillus licheniformis.